Consider the following 944-residue polypeptide: Lactoferrin-binding protein A (944 aa).

Positions 1 to 27 (MNKKHGFSLTLTALAIAAAFPSYAANP) are cleaved as a signal peptide. A TBDR plug domain is found at 52–178 (RRSKEATGLG…LGGAVAFRTK (127 aa)). The TBDR beta-barrel domain occupies 189-944 (SWGIQAKTAY…NFSLALEMKF (756 aa)). Residues 927–944 (GRYAAPGRNFSLALEMKF) carry the TonB C-terminal box motif.

This sequence belongs to the TonB-dependent receptor family.

Its subcellular location is the cell outer membrane. Functionally, unknown. May be an iron-siderophore receptor. The chain is Lactoferrin-binding protein A (lbpA) from Neisseria meningitidis serogroup A / serotype 4A (strain DSM 15465 / Z2491).